The chain runs to 66 residues: Beta-defensin 107A (66 aa).

The N-terminal stretch at 1 to 22 is a signal peptide; that stretch reads MKIFFFIFAALILLAQIFQART. Disulfide bonds link cysteine 37-cysteine 51 and cysteine 41-cysteine 60.

This sequence belongs to the beta-defensin family.

The protein resides in the secreted. In terms of biological role, has antibacterial activity. The sequence is that of Beta-defensin 107A (DEFB107A) from Macaca fascicularis (Crab-eating macaque).